Consider the following 737-residue polypeptide: Autophagy-related protein 22 (737 aa).

The interval 115–154 (RMSPANAGDNSDSYPYGDDTDGDSSSGLPPPRYPGDDTRP) is disordered. Over residues 125–141 (SDSYPYGDDTDGDSSSG) the composition is skewed to low complexity. A run of 4 helical transmembrane segments spans residues 166 to 186 (YAFA…PILL), 232 to 252 (SFAM…VVSI), 264 to 284 (KLLL…IFIS), and 289 to 309 (LIGA…FVLL). The disordered stretch occupies residues 327–353 (GDYGSPGYATTEEGDDEDDEYQEDSTR). A compositionally biased stretch (acidic residues) spans 338–349 (EEGDDEDDEYQE). Asn354 carries N-linked (GlcNAc...) asparagine glycosylation. The chain crosses the membrane as a helical span at residues 395-415 (GIGIGYIAGLFLQCVAIAILI). Asn419 is a glycosylation site (N-linked (GlcNAc...) asparagine). 7 helical membrane passes run 426 to 446 (IVLC…AMWL), 487 to 507 (LVDI…IATT), 524 to 544 (WALG…AFSW), 559 to 579 (ILAC…GYLP), 593 to 613 (WEMY…SGYC), 632 to 652 (LYAI…GAII), and 661 to 681 (AFWF…FINV).

The protein belongs to the ATG22 family.

It is found in the vacuole membrane. Its function is as follows. Vacuolar effluxer which mediate the efflux of amino acids resulting from autophagic degradation. The release of autophagic amino acids allows the maintenance of protein synthesis and viability during nitrogen starvation. In Neurospora crassa (strain ATCC 24698 / 74-OR23-1A / CBS 708.71 / DSM 1257 / FGSC 987), this protein is Autophagy-related protein 22 (apg-11).